Here is a 531-residue protein sequence, read N- to C-terminus: Probable cytochrome P450 4e1 (531 aa).

2 residues coordinate heme: glutamate 307 and cysteine 444.

The protein belongs to the cytochrome P450 family. It depends on heme as a cofactor.

Its subcellular location is the endoplasmic reticulum membrane. The protein localises to the microsome membrane. Functionally, may be involved in the metabolism of insect hormones and in the breakdown of synthetic insecticides. The protein is Probable cytochrome P450 4e1 (Cyp4e1) of Drosophila melanogaster (Fruit fly).